The chain runs to 274 residues: Diaminopimelate epimerase (274 aa).

Substrate is bound by residues Asn11, Gln44, and Asn64. The active-site Proton donor is Cys73. Residues 74–75, Asn157, Asn190, and 208–209 contribute to the substrate site; these read GN and ER. Cys217 acts as the Proton acceptor in catalysis. 218 to 219 contacts substrate; that stretch reads GS.

It belongs to the diaminopimelate epimerase family. Homodimer.

It is found in the cytoplasm. The enzyme catalyses (2S,6S)-2,6-diaminopimelate = meso-2,6-diaminopimelate. It functions in the pathway amino-acid biosynthesis; L-lysine biosynthesis via DAP pathway; DL-2,6-diaminopimelate from LL-2,6-diaminopimelate: step 1/1. Its function is as follows. Catalyzes the stereoinversion of LL-2,6-diaminopimelate (L,L-DAP) to meso-diaminopimelate (meso-DAP), a precursor of L-lysine and an essential component of the bacterial peptidoglycan. In Yersinia pseudotuberculosis serotype O:1b (strain IP 31758), this protein is Diaminopimelate epimerase.